We begin with the raw amino-acid sequence, 312 residues long: DNA-directed RNA polymerase subunit alpha (312 aa).

Residues 1–226 (MIEFEKPNIT…EHFKVFMSTD (226 aa)) are alpha N-terminal domain (alpha-NTD). Residues 243–312 (NEKKLEMTIE…DLGLSLRQDD (70 aa)) form an alpha C-terminal domain (alpha-CTD) region.

This sequence belongs to the RNA polymerase alpha chain family. Homodimer. The RNAP catalytic core consists of 2 alpha, 1 beta, 1 beta' and 1 omega subunit. When a sigma factor is associated with the core the holoenzyme is formed, which can initiate transcription.

The catalysed reaction is RNA(n) + a ribonucleoside 5'-triphosphate = RNA(n+1) + diphosphate. In terms of biological role, DNA-dependent RNA polymerase catalyzes the transcription of DNA into RNA using the four ribonucleoside triphosphates as substrates. The protein is DNA-directed RNA polymerase subunit alpha of Lactobacillus johnsonii (strain CNCM I-12250 / La1 / NCC 533).